The chain runs to 921 residues: Phototropin-1A (921 aa).

A compositionally biased stretch (gly residues) spans 1–11; that stretch reads MASKGTEGGHG. 2 disordered regions span residues 1–59 and 88–118; these read MASK…SPFL and TGLP…QSAA. Residues 40–51 are compositionally biased toward low complexity; sequence SSASSFRTAAAA. Polar residues predominate over residues 97–117; that stretch reads RPSSGSARTSSEDNPQQQQSA. A PAS 1 domain is found at 123–197; the sequence is VSEELRAALS…KIRQSLANGS (75 aa). FMN contacts are provided by residues 172–177, Arg190, Asn205, Asn215, and Gln236; that span reads NCRFLQ. Cys173 carries the S-4a-FMN cysteine modification. Residues 197–251 form the PAC 1 domain; sequence SNYCGRILNYKKDGTPFWNLLTIAPIKDEDGRLLKFIGMQVEVSKYTEGKKDTVV. Over residues 286-295 the composition is skewed to polar residues; sequence RSLSESSNNT. Disordered regions lie at residues 286–347 and 364–390; these read RSLS…NRTR and SVEK…ESFE. 2 stretches are compositionally biased toward basic and acidic residues: residues 312-321 and 364-376; these read PSKRSSESGS and SVEK…RDED. Positions 400 to 473 constitute a PAS 2 domain; the sequence is RGIDLATTLE…RKIRDAIDNQ (74 aa). Residues 449-454, Arg467, Asn482, Asn492, and Gln513 contribute to the FMN site; that span reads NCRFLQ. Residue Cys450 is modified to S-4a-FMN cysteine. Residues 474–528 form the PAC 2 domain; that stretch reads AEVTVQLINYTKSGKKFWNLFHLQPMRDQKGDVQYFIGVQLDGTEHVQDDAAKEG. Residues 594 to 881 form the Protein kinase domain; the sequence is FRPVKPLGSG…ANEIKGHPFF (288 aa). Residues 600 to 608 and Lys623 each bind ATP; that span reads LGSGDTGSV. Asp719 (proton acceptor) is an active-site residue.

The protein belongs to the protein kinase superfamily. Ser/Thr protein kinase family. As to quaternary structure, homodimer. Requires FMN as cofactor. Autophosphorylated in response to blue light irradiation. In terms of processing, 2 molecules of FMN bind covalently to cysteines after exposure to blue light and are reversed in the dark. Highly expressed in coleoptiles of dark-grown seedlings.

It catalyses the reaction L-seryl-[protein] + ATP = O-phospho-L-seryl-[protein] + ADP + H(+). It carries out the reaction L-threonyl-[protein] + ATP = O-phospho-L-threonyl-[protein] + ADP + H(+). Functionally, protein kinase that acts as a blue light photoreceptor in a signal-transduction pathway for phototropic responses. Regulates a wide range of physiological activities in plants that maximize the efficiency of photosynthesis, such as chloroplast relocations, stomata opening, and leaf expansion. The protein is Phototropin-1A (PHOT1A) of Oryza sativa subsp. japonica (Rice).